A 320-amino-acid chain; its full sequence is Protease HtpX homolog (320 aa).

The next 2 helical transmembrane spans lie at 6-26 (TAML…LIGG) and 28-48 (AGMM…YWNS). Zn(2+) is bound at residue H130. E131 is an active-site residue. Residue H134 participates in Zn(2+) binding. 2 helical membrane-spanning segments follow: residues 145–165 (ITAT…FFGG) and 173–193 (PLGF…AMLV). Position 202 (E202) interacts with Zn(2+). Residues 281–320 (GGMNVSTPPVRAANPSRKSRSVPDTGLGRGGSQPPKGPWS) are disordered.

This sequence belongs to the peptidase M48B family. The cofactor is Zn(2+).

It is found in the cell inner membrane. This Rhizobium leguminosarum bv. trifolii (strain WSM2304) protein is Protease HtpX homolog.